Here is a 935-residue protein sequence, read N- to C-terminus: Coiled-coil domain-containing protein 191 (935 aa).

4 coiled-coil regions span residues 189–324, 366–438, 554–589, and 660–740; these read RLTM…ENQQ, YTRS…ALLK, RHVF…AEAQ, and KAME…LEAI. Disordered regions lie at residues 596 to 661 and 678 to 715; these read SAVT…ILKA and EKKK…RKRE.

This Macaca fascicularis (Crab-eating macaque) protein is Coiled-coil domain-containing protein 191 (CCDC191).